Reading from the N-terminus, the 510-residue chain is Probable inorganic carbon transporter subunit DabB (510 aa).

Helical transmembrane passes span 9-29 (TLLT…LLFL), 37-57 (FVHI…LALV), 68-88 (WHLD…GLII), 105-122 (YFAL…AWLS), 125-145 (LRFM…LIGL), 158-178 (ISGY…IWLF), 204-224 (TGIN…WPFQ), 226-246 (WLIE…AGLV), 266-286 (QIIL…ISLV), 303-323 (GFML…HLIL), 355-375 (LWMI…WFIT), 382-402 (LVSA…LVVF), 410-430 (IAGL…HNSL), and 446-466 (APAV…CTFV).

Belongs to the inorganic carbon transporter (TC 9.A.2) DabB family. In terms of assembly, forms a complex with DabA.

Its subcellular location is the cell membrane. Functionally, part of an energy-coupled inorganic carbon pump. Expression of both dabA and dabB (DA2) restores growth in ambient air to E.coli deleted of its carbonic anhydrase genes (called CAfree, deletion of 'can' and 'cynT'). The sequence is that of Probable inorganic carbon transporter subunit DabB from Bacillus anthracis.